Here is a 477-residue protein sequence, read N- to C-terminus: Bifunctional protein HldE (477 aa).

A ribokinase region spans residues 1–318 (MKVTLPEFER…ENAVRGRADT (318 aa)). N6-acetyllysine is present on K179. 195–198 (NLSE) is an ATP binding site. The active site involves D264. A cytidylyltransferase region spans residues 344–477 (MTNGVFDILH…IKKIQQDKKG (134 aa)).

This sequence in the N-terminal section; belongs to the carbohydrate kinase PfkB family. In the C-terminal section; belongs to the cytidylyltransferase family. In terms of assembly, homodimer.

The enzyme catalyses D-glycero-beta-D-manno-heptose 7-phosphate + ATP = D-glycero-beta-D-manno-heptose 1,7-bisphosphate + ADP + H(+). The catalysed reaction is D-glycero-beta-D-manno-heptose 1-phosphate + ATP + H(+) = ADP-D-glycero-beta-D-manno-heptose + diphosphate. It functions in the pathway nucleotide-sugar biosynthesis; ADP-L-glycero-beta-D-manno-heptose biosynthesis; ADP-L-glycero-beta-D-manno-heptose from D-glycero-beta-D-manno-heptose 7-phosphate: step 1/4. Its pathway is nucleotide-sugar biosynthesis; ADP-L-glycero-beta-D-manno-heptose biosynthesis; ADP-L-glycero-beta-D-manno-heptose from D-glycero-beta-D-manno-heptose 7-phosphate: step 3/4. It participates in bacterial outer membrane biogenesis; LPS core biosynthesis. Its function is as follows. Catalyzes the phosphorylation of D-glycero-D-manno-heptose 7-phosphate at the C-1 position to selectively form D-glycero-beta-D-manno-heptose-1,7-bisphosphate. Catalyzes the ADP transfer from ATP to D-glycero-beta-D-manno-heptose 1-phosphate, yielding ADP-D-glycero-beta-D-manno-heptose. The protein is Bifunctional protein HldE of Escherichia coli O157:H7.